We begin with the raw amino-acid sequence, 202 residues long: Large ribosomal subunit protein mL40 (202 aa).

The tract at residues 42–79 is disordered; that stretch reads IQHQQTASYASKGKSGPPAGMFSGQKAGSKKSKGPKQV.

It belongs to the mitochondrion-specific ribosomal protein mL40 family. In terms of assembly, component of the mitochondrial large ribosomal subunit (mt-LSU). Mature N.crassa 74S mitochondrial ribosomes consist of a small (37S) and a large (54S) subunit. The 37S small subunit contains a 16S ribosomal RNA (16S mt-rRNA) and 32 different proteins. The 54S large subunit contains a 23S rRNA (23S mt-rRNA) and 42 different proteins. mL40 is binding to NAD.

The protein resides in the mitochondrion. In terms of biological role, component of the mitochondrial ribosome (mitoribosome), a dedicated translation machinery responsible for the synthesis of mitochondrial genome-encoded proteins, including at least some of the essential transmembrane subunits of the mitochondrial respiratory chain. The mitoribosomes are attached to the mitochondrial inner membrane and translation products are cotranslationally integrated into the membrane. In Neurospora crassa (strain ATCC 24698 / 74-OR23-1A / CBS 708.71 / DSM 1257 / FGSC 987), this protein is Large ribosomal subunit protein mL40 (mrpl28).